Consider the following 39-residue polypeptide: Photosystem II reaction center protein L (39 aa).

A helical membrane pass occupies residues 18-38 (SLYLGLLLVFVLGILFSSYFF).

Belongs to the PsbL family. PSII is composed of 1 copy each of membrane proteins PsbA, PsbB, PsbC, PsbD, PsbE, PsbF, PsbH, PsbI, PsbJ, PsbK, PsbL, PsbM, PsbT, PsbX, PsbY, Psb30/Ycf12, peripheral proteins PsbO, CyanoQ (PsbQ), PsbU, PsbV and a large number of cofactors. It forms dimeric complexes.

The protein localises to the cellular thylakoid membrane. In terms of biological role, one of the components of the core complex of photosystem II (PSII). PSII is a light-driven water:plastoquinone oxidoreductase that uses light energy to abstract electrons from H(2)O, generating O(2) and a proton gradient subsequently used for ATP formation. It consists of a core antenna complex that captures photons, and an electron transfer chain that converts photonic excitation into a charge separation. This subunit is found at the monomer-monomer interface and is required for correct PSII assembly and/or dimerization. The chain is Photosystem II reaction center protein L from Prochlorococcus marinus (strain SARG / CCMP1375 / SS120).